Here is a 323-residue protein sequence, read N- to C-terminus: ComG operon protein 2 (323 aa).

3 helical membrane passes run 93–113 (YPLF…SIII), 143–163 (LVII…WLVF), and 296–316 (MIYG…LVPM).

Belongs to the GSP F family.

The protein localises to the cell membrane. Its function is as follows. Required for transformation and DNA binding. The chain is ComG operon protein 2 (comGB) from Bacillus subtilis (strain 168).